The primary structure comprises 164 residues: Small ribosomal subunit protein uS5 (164 aa).

The S5 DRBM domain occupies 10 to 73 (LEERVVAINR…EAAKKNLIEV (64 aa)).

The protein belongs to the universal ribosomal protein uS5 family. In terms of assembly, part of the 30S ribosomal subunit. Contacts proteins S4 and S8.

Its function is as follows. With S4 and S12 plays an important role in translational accuracy. Located at the back of the 30S subunit body where it stabilizes the conformation of the head with respect to the body. The protein is Small ribosomal subunit protein uS5 of Streptococcus thermophilus (strain CNRZ 1066).